The sequence spans 89 residues: Large ribosomal subunit protein bL27 (89 aa).

The tract at residues 1–21 (MAHKKAGGSSRNGRDSKGKRL) is disordered.

Belongs to the bacterial ribosomal protein bL27 family.

In Bradyrhizobium sp. (strain BTAi1 / ATCC BAA-1182), this protein is Large ribosomal subunit protein bL27.